The primary structure comprises 329 residues: Lipoyl synthase (329 aa).

A disordered region spans residues 1–23 (MTDLTATPAPAEPAASAYDPTAK). [4Fe-4S] cluster contacts are provided by Cys76, Cys81, Cys87, Cys102, Cys106, Cys109, and Ser316. The 219-residue stretch at 87–305 (CFGKGTATFM…EEEAYKMGFT (219 aa)) folds into the Radical SAM core domain.

The protein belongs to the radical SAM superfamily. Lipoyl synthase family. It depends on [4Fe-4S] cluster as a cofactor.

It localises to the cytoplasm. It catalyses the reaction [[Fe-S] cluster scaffold protein carrying a second [4Fe-4S](2+) cluster] + N(6)-octanoyl-L-lysyl-[protein] + 2 oxidized [2Fe-2S]-[ferredoxin] + 2 S-adenosyl-L-methionine + 4 H(+) = [[Fe-S] cluster scaffold protein] + N(6)-[(R)-dihydrolipoyl]-L-lysyl-[protein] + 4 Fe(3+) + 2 hydrogen sulfide + 2 5'-deoxyadenosine + 2 L-methionine + 2 reduced [2Fe-2S]-[ferredoxin]. Its pathway is protein modification; protein lipoylation via endogenous pathway; protein N(6)-(lipoyl)lysine from octanoyl-[acyl-carrier-protein]: step 2/2. Functionally, catalyzes the radical-mediated insertion of two sulfur atoms into the C-6 and C-8 positions of the octanoyl moiety bound to the lipoyl domains of lipoate-dependent enzymes, thereby converting the octanoylated domains into lipoylated derivatives. The polypeptide is Lipoyl synthase (Burkholderia pseudomallei (strain 1106a)).